A 355-amino-acid chain; its full sequence is Peptide chain release factor 1 (355 aa).

Glutamine 233 bears the N5-methylglutamine mark. Positions 280–293 are enriched in basic and acidic residues; sequence KRRQKEQERSDSRR. Residues 280–310 are disordered; the sequence is KRRQKEQERSDSRRGQVGSGDRSERIRTYNF.

The protein belongs to the prokaryotic/mitochondrial release factor family. Post-translationally, methylated by PrmC. Methylation increases the termination efficiency of RF1.

The protein localises to the cytoplasm. Its function is as follows. Peptide chain release factor 1 directs the termination of translation in response to the peptide chain termination codons UAG and UAA. The polypeptide is Peptide chain release factor 1 (prfA) (Rickettsia prowazekii (strain Madrid E)).